Consider the following 475-residue polypeptide: 3-isopropylmalate dehydratase large subunit (475 aa).

The [4Fe-4S] cluster site is built by cysteine 353, cysteine 414, and cysteine 417.

Belongs to the aconitase/IPM isomerase family. LeuC type 1 subfamily. In terms of assembly, heterodimer of LeuC and LeuD. [4Fe-4S] cluster serves as cofactor.

It carries out the reaction (2R,3S)-3-isopropylmalate = (2S)-2-isopropylmalate. Its pathway is amino-acid biosynthesis; L-leucine biosynthesis; L-leucine from 3-methyl-2-oxobutanoate: step 2/4. Functionally, catalyzes the isomerization between 2-isopropylmalate and 3-isopropylmalate, via the formation of 2-isopropylmaleate. This is 3-isopropylmalate dehydratase large subunit from Stutzerimonas stutzeri (strain A1501) (Pseudomonas stutzeri).